A 462-amino-acid polypeptide reads, in one-letter code: Tissue alpha-L-fucosidase (462 aa).

The N-terminal stretch at 1–28 (MWDLKSEWWAVGFGLLLLLAASAQAGGL) is a signal peptide. N-linked (GlcNAc...) asparagine glycans are attached at residues Asn-237, Asn-264, and Asn-378.

It belongs to the glycosyl hydrolase 29 family. Homotetramer.

It is found in the lysosome. It catalyses the reaction an alpha-L-fucoside + H2O = L-fucose + an alcohol. It carries out the reaction a neolactoside IV(2)-alpha-Fuc-nLc4Cer(d18:1(4E)) + H2O = a neolactoside nLc4Cer(d18:1(4E)) + L-fucose. The catalysed reaction is a neolactoside IV(2)-alpha-Fuc-nLc4Cer(d18:0) + H2O = a neolactoside nLc4Cer(d18:0) + L-fucose. Functionally, alpha-L-fucosidase is responsible for hydrolyzing the alpha-1,6-linked fucose joined to the reducing-end N-acetylglucosamine of the carbohydrate moieties of glycoproteins. The polypeptide is Tissue alpha-L-fucosidase (Fuca1) (Rattus norvegicus (Rat)).